We begin with the raw amino-acid sequence, 378 residues long: Interleukin-3 receptor subunit alpha (378 aa).

The first 18 residues, 1–18 (MVLLWLTLLLIALPCLLQ), serve as a signal peptide directing secretion. At 19–305 (TKEDPNPPIT…EEGANTRAWR (287 aa)) the chain is on the extracellular side. N-linked (GlcNAc...) asparagine glycosylation is found at N46, N64, N80, and N109. 4 disulfides stabilise this stretch: C52–C68, C76–C195, C112–C122, and C151–C165. N212 and N218 each carry an N-linked (GlcNAc...) asparagine glycan. The cysteines at positions 217 and 293 are disulfide-linked. Residues 282 to 286 (LSAWS) carry the WSXWS motif motif. The helical transmembrane segment at 306–325 (TSLLIALGTLLALVCVFVIC) threads the bilayer. Residues 326–378 (RRYLVMQRLFPRIPHMKDPIGDSFQNDKLVVWEAGKAGLEECLVTEVQVVQKT) are Cytoplasmic-facing. The short motif at 334–342 (LFPRIPHMK) is the Box 1 motif element.

It belongs to the type I cytokine receptor family. Type 5 subfamily. As to quaternary structure, interacts with IL3. Heterodimer of an alpha and a beta subunit. The beta subunit is common to the IL3, IL5 and GM-CSF receptors. Post-translationally, ubiquitinated by RNFT2 in response to IL3. Ubiquitination leads ligand-induced degradation by the proteasome. Ubiquitinated by RNF128 via 'Lys-27'-linked polyubiquitination, facilitating its degradation through the lysosomal pathway.

The protein localises to the cell membrane. Its function is as follows. Cell surface receptor for IL3 expressed on hematopoietic progenitor cells, monocytes and B-lymphocytes that controls the production and differentiation of hematopoietic progenitor cells into lineage-restricted cells. Ligand stimulation rapidly induces hetrodimerization with IL3RB, phosphorylation and enzyme activity of effector proteins such as JAK2 and PI3K that play a role in signaling cell proliferation and differentiation. Activation of JAK2 leads to STAT5-mediated transcriptional program. The chain is Interleukin-3 receptor subunit alpha from Homo sapiens (Human).